We begin with the raw amino-acid sequence, 619 residues long: Kinesin light chain 4 (619 aa).

The residue at position 2 (Ser-2) is an N-acetylserine. The TPR 1 repeat unit spans residues 55 to 88 (QQGGHEEGLVHEKARQLRRSMENIELGLSEAQVM). Positions 65–155 (HEKARQLRRS…HLEFLRQLRQ (91 aa)) form a coiled coil. A compositionally biased stretch (basic and acidic residues) spans 156–175 (YDEDGHGMEEKEGEATKDSL). A disordered region spans residues 156 to 199 (YDEDGHGMEEKEGEATKDSLDDLFPNEEEEDSGNDLSRGQGAAA). Ser-174 is modified (phosphoserine). Residues 179-188 (FPNEEEEDSG) show a composition bias toward acidic residues. TPR repeat units lie at residues 211–244 (LRTL…LERT), 253–286 (ATML…REST), 295–328 (AATL…REKV), 337–370 (AKQL…YESQ), and 379–412 (ARTK…AHVQ). Ser-460 is subject to Phosphoserine. The TPR 7 repeat unit spans residues 464-497 (NTTLKNLGALYRRQGKLEAAETLEECALRSRKQG). Ser-565, Ser-566, and Ser-590 each carry phosphoserine. A disordered region spans residues 571–619 (RKLQGTEPRPSSSSMKRAASLNYLNQPNAAPLQVSRGLSASTVDLSSSS). The segment covering 609 to 619 (SASTVDLSSSS) has biased composition (low complexity). Thr-612 is modified (phosphothreonine).

Belongs to the kinesin light chain family. In terms of assembly, oligomeric complex composed of two heavy chains and two light chains.

It is found in the cytoplasm. It localises to the cytoskeleton. Its function is as follows. Kinesin is a microtubule-associated force-producing protein that may play a role in organelle transport. The light chain may function in coupling of cargo to the heavy chain or in the modulation of its ATPase activity. The protein is Kinesin light chain 4 (Klc4) of Mus musculus (Mouse).